The following is an 890-amino-acid chain: Translation initiation factor IF-2 (890 aa).

Residues Leu-45–Gln-304 form a disordered region. Polar residues predominate over residues Ser-67–Val-81. Residues Val-92 to Asp-217 show a composition bias toward basic and acidic residues. The segment covering Gly-252–Asn-266 has biased composition (basic residues). Positions Lys-267–Ala-280 are enriched in basic and acidic residues. In terms of domain architecture, tr-type G spans Pro-389–Lys-558. Positions Gly-398 to Thr-405 are G1. Gly-398–Thr-405 contacts GTP. The G2 stretch occupies residues Gly-423–His-427. Residues Asp-444–Gly-447 are G3. Residues Asp-444–His-448 and Asn-498–Asp-501 each bind GTP. Positions Asn-498 to Asp-501 are G4. Positions Ser-534–Lys-536 are G5. Lys-808 carries the post-translational modification N6-acetyllysine.

The protein belongs to the TRAFAC class translation factor GTPase superfamily. Classic translation factor GTPase family. IF-2 subfamily.

Its subcellular location is the cytoplasm. Functionally, one of the essential components for the initiation of protein synthesis. Protects formylmethionyl-tRNA from spontaneous hydrolysis and promotes its binding to the 30S ribosomal subunits. Also involved in the hydrolysis of GTP during the formation of the 70S ribosomal complex. The polypeptide is Translation initiation factor IF-2 (Shigella sonnei (strain Ss046)).